The sequence spans 373 residues: MSEQDQELRNRQAQFAKELHGESVERSGLTALLGKNREAQQEAVAKYLRHWDGATDAEAEERRLADYNESTHSYYNVVTDFYEYGWGASFHFSRFYTGESFAMSMARHEHYLAHRAGITSGDLVLDVGCGVGGPAREIARFTGCRVVGLNNNDYQIMKGKHYSRKLGLGDQVSYVKGDFMNMDFPDATFDKVYAIEATCHAPSFEGVYGEIYRVLKPGGVFAVYEWVMTENYDETNPEHRRIAYDIELGDGIPKMYSVKVARDALAKVGFEILVDEDRADNDDPVPWYYPLTGEWAYIQTIADLGTFVRTSALGRRVTSAFVSLMETLRLAPRGSSEVVNALESAAAGLVAGGKSKLFTPMMLFVARKPETAE.

The protein belongs to the class I-like SAM-binding methyltransferase superfamily. Erg6/SMT family.

The enzyme catalyses zymosterol + S-adenosyl-L-methionine = fecosterol + S-adenosyl-L-homocysteine + H(+). The protein operates within steroid metabolism; ergosterol biosynthesis; ergosterol from zymosterol: step 1/5. In terms of biological role, catalyzes the methyl transfer from S-adenosyl-methionine to the C-24 of zymosterol to form fecosterol. This chain is Sterol 24-C-methyltransferase (ERG6), found in Eremothecium gossypii (strain ATCC 10895 / CBS 109.51 / FGSC 9923 / NRRL Y-1056) (Yeast).